We begin with the raw amino-acid sequence, 682 residues long: Heat shock 70 kDa protein, mitochondrial (682 aa).

A mitochondrion-targeting transit peptide spans 1–57 (MATAALLRSLRRREFATSSISAYRTLASNTKPSWCPSLVGAKWAGLARPFSSKPAGN). Residues 649 to 682 (GEHMAGGSSGGASGGGGAQGGDQPPEAEYEEVKK) are disordered. Over residues 655–668 (GSSGGASGGGGAQG) the composition is skewed to gly residues. Residues 673–682 (PEAEYEEVKK) show a composition bias toward acidic residues.

The protein belongs to the heat shock protein 70 family.

The protein localises to the mitochondrion. This Solanum tuberosum (Potato) protein is Heat shock 70 kDa protein, mitochondrial (HSP68).